Consider the following 197-residue polypeptide: ATP-dependent Clp protease proteolytic subunit 2 (197 aa).

The Nucleophile role is filled by S96. H121 is a catalytic residue.

Belongs to the peptidase S14 family. As to quaternary structure, fourteen ClpP subunits assemble into 2 heptameric rings which stack back to back to give a disk-like structure with a central cavity, resembling the structure of eukaryotic proteasomes.

The protein resides in the cytoplasm. The catalysed reaction is Hydrolysis of proteins to small peptides in the presence of ATP and magnesium. alpha-casein is the usual test substrate. In the absence of ATP, only oligopeptides shorter than five residues are hydrolyzed (such as succinyl-Leu-Tyr-|-NHMec, and Leu-Tyr-Leu-|-Tyr-Trp, in which cleavage of the -Tyr-|-Leu- and -Tyr-|-Trp bonds also occurs).. Cleaves peptides in various proteins in a process that requires ATP hydrolysis. Has a chymotrypsin-like activity. Plays a major role in the degradation of misfolded proteins. The chain is ATP-dependent Clp protease proteolytic subunit 2 from Parasynechococcus marenigrum (strain WH8102).